We begin with the raw amino-acid sequence, 356 residues long: Probable methyltransferase-like protein 15 homolog (356 aa).

S-adenosyl-L-methionine contacts are provided by residues 55–57 (GGH), D74, F103, D126, and Q133.

Belongs to the methyltransferase superfamily. RsmH family.

In terms of biological role, probable S-adenosyl-L-methionine-dependent methyltransferase. This Drosophila melanogaster (Fruit fly) protein is Probable methyltransferase-like protein 15 homolog.